The chain runs to 453 residues: Trigger factor (453 aa).

In terms of domain architecture, PPIase FKBP-type spans 171–256 (GDRITISFKG…VSLIEAPEEL (86 aa)).

The protein belongs to the FKBP-type PPIase family. Tig subfamily.

It is found in the cytoplasm. It catalyses the reaction [protein]-peptidylproline (omega=180) = [protein]-peptidylproline (omega=0). Its function is as follows. Involved in protein export. Acts as a chaperone by maintaining the newly synthesized protein in an open conformation. Functions as a peptidyl-prolyl cis-trans isomerase. This is Trigger factor from Nitrobacter winogradskyi (strain ATCC 25391 / DSM 10237 / CIP 104748 / NCIMB 11846 / Nb-255).